Here is a 754-residue protein sequence, read N- to C-terminus: 5-methyltetrahydropteroyltriglutamate--homocysteine methyltransferase (754 aa).

5-methyltetrahydropteroyltri-L-glutamate-binding positions include 17–20 and K117; that span reads RELK. L-homocysteine contacts are provided by residues 431 to 433 and E484; that span reads IGS. Residues 431–433 and E484 each bind L-methionine; that span reads IGS. Residues 515–516 and W561 contribute to the 5-methyltetrahydropteroyltri-L-glutamate site; that span reads RC. D599 lines the L-homocysteine pocket. Residue D599 coordinates L-methionine. 5-methyltetrahydropteroyltri-L-glutamate is bound at residue E605. Zn(2+) is bound by residues H641, C643, and E665. The Proton donor role is filled by H694. C726 lines the Zn(2+) pocket.

This sequence belongs to the vitamin-B12 independent methionine synthase family. The cofactor is Zn(2+).

It catalyses the reaction 5-methyltetrahydropteroyltri-L-glutamate + L-homocysteine = tetrahydropteroyltri-L-glutamate + L-methionine. It functions in the pathway amino-acid biosynthesis; L-methionine biosynthesis via de novo pathway; L-methionine from L-homocysteine (MetE route): step 1/1. In terms of biological role, catalyzes the transfer of a methyl group from 5-methyltetrahydrofolate to homocysteine resulting in methionine formation. This is 5-methyltetrahydropteroyltriglutamate--homocysteine methyltransferase from Salmonella paratyphi B (strain ATCC BAA-1250 / SPB7).